Consider the following 568-residue polypeptide: MSLCDQCEIGCRRVGIKDIEDASAVNADFHFSAIFQPTDPHHHQTEFAKVEGSEKYVEEVEVFGRQALKVNPEALTILAHRAFSDVHHFFRKDHLEGWRRAIEDPEASDNDRYVATTLLKNACIAAGRVLPSCQDTGTAIVLGKRGELCWTGGEDEKYLSKGIWNAYRYHNLRYSQTAALDMFKECNTGDNLPAQLDLLAVPGSDYEFLFIAKGGGSANKAYLYQETKALLNPKSLRAFIEEKLKTLGTAACPPYHIALVIGGTSAEMTMKTVKLASCRYYDSLPTTGDKYGRAFRDPEWEKIVMEVAQKSGIGAQFGGKYFAHQARVIRLPRHGASCPVGLAVSCSADRQILAHINKSGIYIEQLEQNPAQYLPDIPEVHLSTTSVKVDLKRPIDKVRQQLSQYPVGTRVMLNGTLIVARDIAHAKIKEMMDNGEPLPEYMKTSPIYYAGPAKTPEGYASGSFGPTTAGRMDSYVDLFQSHGGSYITLAKGNRSKQVTDACKKHGGFYLGSIGGPAAILAKDSIKQVTCLAFPELGMEAVWKIEVEDFPAFIVVDDKGNDMYSKTLA.

Residue Cys-133 participates in [4Fe-4S] cluster binding. (S)-malate is bound by residues 134-135 (QD), Arg-173, Gly-216, and 219-225 (NKAYLYQ). Residues Cys-252 and Cys-346 each coordinate [4Fe-4S] cluster. Residues Arg-421, 467 to 471 (TTAGR), and Lys-491 each bind (S)-malate.

The protein belongs to the class-I fumarase family. As to quaternary structure, homodimer. Requires [4Fe-4S] cluster as cofactor.

It is found in the cytoplasm. The protein resides in the cytosol. It catalyses the reaction (S)-malate = fumarate + H2O. With respect to regulation, specifically and competitively inhibited by 2-thiomalate, which coordinates with the catalytic [4Fe-4S] cluster. Weakly inhibited by malonate. Functionally, cytosolic fumarate hydratase that catalyzes the reversible hydration of fumarate to (S)-malate. The polypeptide is Fumarate hydratase 2 (Leishmania major).